We begin with the raw amino-acid sequence, 234 residues long: MELYCKLIMVTQNNNNKYYEMKYEGGDTFTVIYGRVDQSSTVISKPFKEWDKIKNSKLKKGYKDVSSKSVSSVESNEREIENKSIKEFIHKMRAYTNLLVSNTYSVNSKEVSSSQISNAQKLLNKISSMDMDENVDEINELLILLYTCIPRKIKNVKKCILPYIDIKQTIIQEQDNLDALSSQLKKNVSQNNKINNILNVHFSKFLEEASSSFNIDVCKLKSILNEDKTFLEMI.

This is an uncharacterized protein from Acheta domesticus (House cricket).